The sequence spans 291 residues: 4-diphosphocytidyl-2-C-methyl-D-erythritol kinase (291 aa).

Lys11 is a catalytic residue. 97–107 provides a ligand contact to ATP; the sequence is PVAAGIGGGSS. The active site involves Asp139.

This sequence belongs to the GHMP kinase family. IspE subfamily.

It carries out the reaction 4-CDP-2-C-methyl-D-erythritol + ATP = 4-CDP-2-C-methyl-D-erythritol 2-phosphate + ADP + H(+). It functions in the pathway isoprenoid biosynthesis; isopentenyl diphosphate biosynthesis via DXP pathway; isopentenyl diphosphate from 1-deoxy-D-xylulose 5-phosphate: step 3/6. Catalyzes the phosphorylation of the position 2 hydroxy group of 4-diphosphocytidyl-2C-methyl-D-erythritol. This is 4-diphosphocytidyl-2-C-methyl-D-erythritol kinase from Methylorubrum extorquens (strain PA1) (Methylobacterium extorquens).